The chain runs to 173 residues: NADH-ubiquinone oxidoreductase chain 6 (173 aa).

A run of 6 helical transmembrane segments spans residues 1 to 21 (MIYFVFVVLMGLVVGLMAVAS), 27 to 47 (FAALGLVFSAVVGCGFLVGYG), 53 to 73 (LVLFLIYLGGMLVVFAYSAAL), 82 to 102 (WGSWSVFLYILVYLFGFLLVG), 106 to 126 (YGWWYDFYWMSLDVFGEMSVL), and 141 to 161 (GFLLLVTGWVLLLALFVVLEI).

Belongs to the complex I subunit 6 family.

The protein resides in the mitochondrion membrane. The catalysed reaction is a ubiquinone + NADH + 5 H(+)(in) = a ubiquinol + NAD(+) + 4 H(+)(out). Functionally, core subunit of the mitochondrial membrane respiratory chain NADH dehydrogenase (Complex I) that is believed to belong to the minimal assembly required for catalysis. Complex I functions in the transfer of electrons from NADH to the respiratory chain. The immediate electron acceptor for the enzyme is believed to be ubiquinone. The protein is NADH-ubiquinone oxidoreductase chain 6 (MT-ND6) of Latimeria chalumnae (Coelacanth).